Reading from the N-terminus, the 283-residue chain is NAD kinase (283 aa).

D68 functions as the Proton acceptor in the catalytic mechanism. NAD(+)-binding positions include 68-69 (DG), R73, 142-143 (ND), R153, R170, D172, and 183-188 (TAYSLS).

Belongs to the NAD kinase family. It depends on a divalent metal cation as a cofactor.

Its subcellular location is the cytoplasm. The enzyme catalyses NAD(+) + ATP = ADP + NADP(+) + H(+). Its function is as follows. Involved in the regulation of the intracellular balance of NAD and NADP, and is a key enzyme in the biosynthesis of NADP. Catalyzes specifically the phosphorylation on 2'-hydroxyl of the adenosine moiety of NAD to yield NADP. This chain is NAD kinase, found in Symbiobacterium thermophilum (strain DSM 24528 / JCM 14929 / IAM 14863 / T).